The following is a 321-amino-acid chain: Cytochrome c biogenesis protein CcsA (321 aa).

Transmembrane regions (helical) follow at residues 9–29 (ILTH…LMTL), 44–64 (GLIA…IYSG), 71–91 (LYES…VPYF), 97–117 (LLST…TSGL), 143–163 (MILS…LLVI), 227–247 (VISL…VWAN), 261–275 (TWAF…IYLH), and 288–308 (AIVA…VNLL).

Belongs to the CcmF/CycK/Ccl1/NrfE/CcsA family. May interact with Ccs1.

Its subcellular location is the plastid. It is found in the chloroplast thylakoid membrane. Required during biogenesis of c-type cytochromes (cytochrome c6 and cytochrome f) at the step of heme attachment. The sequence is that of Cytochrome c biogenesis protein CcsA from Nandina domestica (Heavenly bamboo).